The primary structure comprises 396 residues: Elongation factor Tu (396 aa).

The tr-type G domain maps to 10–206 (KPHVNVGTIG…VLDTYIPEPE (197 aa)). Residues 19 to 26 (GHVDHGKT) form a G1 region. 19–26 (GHVDHGKT) lines the GTP pocket. Threonine 26 is a Mg(2+) binding site. Residues 60–64 (GITIN) are G2. The tract at residues 81–84 (DCPG) is G3. GTP-binding positions include 81–85 (DCPGH) and 136–139 (NKCD). Residues 136-139 (NKCD) are G4. The tract at residues 174–176 (SAT) is G5.

The protein belongs to the TRAFAC class translation factor GTPase superfamily. Classic translation factor GTPase family. EF-Tu/EF-1A subfamily. Monomer.

It localises to the cytoplasm. The enzyme catalyses GTP + H2O = GDP + phosphate + H(+). Its function is as follows. GTP hydrolase that promotes the GTP-dependent binding of aminoacyl-tRNA to the A-site of ribosomes during protein biosynthesis. The chain is Elongation factor Tu from Psychrobacter arcticus (strain DSM 17307 / VKM B-2377 / 273-4).